The chain runs to 485 residues: MYVNRRFYDKYVSTRDVELLHEYSLRVLKEVGVSFDCEEALEIFKKHGATVEGSIVKIDEDLLNQALETAPKTFTITTSAGETKIGERYKPKTVGCYGPPKFLFEDDEYRVAKKDDMVKFLKLMDTSDVTDFVNNSAYDTPDLDKTKEDFYLPQVAMCLKYSQKPTYGNVANSMNVRGKSLKQEAKDIAKLYKEFYDIWDRPVLLTNTCALSPLGYSYEVLDNIMGLVEEGQPVTIITCSMTNLTAPAALLGSVIQNNATILAGIVLTQLINPGNPVIYGTVSTATDMRNVACSIGAPEAQLIQMASLALGRYYQLPVRTGIAGTDSLKPDYQAGVESFMILMTTYLGKSDFVLNHAGILQAYALGSYEKFVLDEEVNRILLRLNRGIDISDVKAEKVFDAIKKAGPLGNYLSGRTPKEYRQEHWLTKLFNRQAGNPQPIFDEIGDLRERASKEVEERVAGYTLPDLTKTQKDILNRYLPEDEKF.

Belongs to the trimethylamine methyltransferase family. The proline betaine:THF methyl transfer system is composed of two methyltransferases, MtpB and MtqA, and the corrinoid protein MtqC.

It carries out the reaction Co(I)-[quaternary-amine-specific corrinoid protein] + L-proline betaine + H(+) = methyl-Co(III)-[quaternary-amine-specific corrinoid protein] + N-methyl-L-proline. Involved in the degradation of the quaternary amine L-proline betaine. Component of a corrinoid-dependent methyltransferase system that transfers a methyl group from L-proline betaine to tetrahydrofolate (THF), forming methyl-THF, a key intermediate in the Wood-Ljungdahl acetogenesis pathway. MtpB catalyzes the methylation of the corrinoid protein MtqC, using L-proline betaine as the methyl donor. Shows weak activity with some other quaternary amines, including carnitine, phosphocholine, glycine betaine or betonicine, but cannot methylate free cob(I)alamin. This is Proline betaine:corrinoid methyltransferase from Eubacterium limosum.